The sequence spans 134 residues: D-ribose pyranase (134 aa).

The Proton donor role is filled by His20. Substrate is bound by residues Asp28, His101, and 123-125; that span reads YSN.

The protein belongs to the RbsD / FucU family. RbsD subfamily. As to quaternary structure, homodecamer.

It is found in the cytoplasm. The enzyme catalyses beta-D-ribopyranose = beta-D-ribofuranose. It functions in the pathway carbohydrate metabolism; D-ribose degradation; D-ribose 5-phosphate from beta-D-ribopyranose: step 1/2. In terms of biological role, catalyzes the interconversion of beta-pyran and beta-furan forms of D-ribose. This chain is D-ribose pyranase, found in Pseudomonas syringae pv. tomato (strain ATCC BAA-871 / DC3000).